Here is a 349-residue protein sequence, read N- to C-terminus: Protein-glutamate methylesterase/protein-glutamine glutaminase (349 aa).

The Response regulatory domain maps to 5–122; that stretch reads RVLSVDDSAL…REGMLAYSEM (118 aa). Aspartate 56 carries the post-translational modification 4-aspartylphosphate. The region spanning 152-344 is the CheB-type methylesterase domain; it reads LLSSEKLIAI…QQMLAKISAG (193 aa). Catalysis depends on residues serine 164, histidine 190, and aspartate 286.

This sequence belongs to the CheB family. Phosphorylated by CheA. Phosphorylation of the N-terminal regulatory domain activates the methylesterase activity.

The protein resides in the cytoplasm. The enzyme catalyses [protein]-L-glutamate 5-O-methyl ester + H2O = L-glutamyl-[protein] + methanol + H(+). It carries out the reaction L-glutaminyl-[protein] + H2O = L-glutamyl-[protein] + NH4(+). Its function is as follows. Involved in chemotaxis. Part of a chemotaxis signal transduction system that modulates chemotaxis in response to various stimuli. Catalyzes the demethylation of specific methylglutamate residues introduced into the chemoreceptors (methyl-accepting chemotaxis proteins or MCP) by CheR. Also mediates the irreversible deamidation of specific glutamine residues to glutamic acid. The chain is Protein-glutamate methylesterase/protein-glutamine glutaminase from Salmonella paratyphi A (strain ATCC 9150 / SARB42).